The following is a 105-amino-acid chain: Large ribosomal subunit protein uL24 (105 aa).

Belongs to the universal ribosomal protein uL24 family. In terms of assembly, part of the 50S ribosomal subunit.

One of two assembly initiator proteins, it binds directly to the 5'-end of the 23S rRNA, where it nucleates assembly of the 50S subunit. Functionally, one of the proteins that surrounds the polypeptide exit tunnel on the outside of the subunit. This is Large ribosomal subunit protein uL24 from Lachnoclostridium phytofermentans (strain ATCC 700394 / DSM 18823 / ISDg) (Clostridium phytofermentans).